The primary structure comprises 836 residues: Serine/threonine-protein kinase ATG1 (836 aa).

A Protein kinase domain is found at 21–321 (YTVEKEIGKG…FNEFFNNEVV (301 aa)). ATP-binding positions include 27-35 (IGKGSFAIV) and lysine 50. Residue aspartate 168 is the Proton acceptor of the active site. Disordered regions lie at residues 387 to 425 (EHYR…GQTR), 458 to 489 (NNGP…GGRR), and 619 to 642 (CAID…TPGA). A compositionally biased stretch (low complexity) spans 395 to 404 (LQGQQQQQQQ). Composition is skewed to polar residues over residues 411 to 425 (RGST…GQTR), 459 to 468 (NGPTTNNQGA), and 630 to 640 (GNPSSNQTLTP). The tract at residues 571-836 (ITPFVESLSA…RLKALKSKMS (266 aa)) is interaction with ATG13.

It belongs to the protein kinase superfamily. Ser/Thr protein kinase family. APG1/unc-51/ULK1 subfamily. In terms of assembly, homodimer. Dimerization requires the presence of ATG13. Forms a ternary complex with ATG13 and ATG17.

It localises to the cytoplasm. The protein localises to the preautophagosomal structure membrane. The enzyme catalyses L-seryl-[protein] + ATP = O-phospho-L-seryl-[protein] + ADP + H(+). It carries out the reaction L-threonyl-[protein] + ATP = O-phospho-L-threonyl-[protein] + ADP + H(+). Functionally, serine/threonine protein kinase involved in the cytoplasm to vacuole transport (Cvt) and found to be essential in autophagy, where it is required for the formation of autophagosomes. Involved in the clearance of protein aggregates which cannot be efficiently cleared by the proteasome. Required for selective autophagic degradation of the nucleus (nucleophagy) as well as for mitophagy which contributes to regulate mitochondrial quantity and quality by eliminating the mitochondria to a basal level to fulfill cellular energy requirements and preventing excess ROS production. Also involved in endoplasmic reticulum-specific autophagic process, in selective removal of ER-associated degradation (ERAD) substrates. Plays a key role in ATG9 and ATG23 cycling through the pre-autophagosomal structure and is necessary to promote ATG18 binding to ATG9 through phosphorylation of ATG9. Catalyzes phosphorylation of ATG4, decreasing the interaction between ATG4 and ATG8 and impairing deconjugation of PE-conjugated forms of ATG8. This is Serine/threonine-protein kinase ATG1 from Kluyveromyces marxianus (strain DMKU3-1042 / BCC 29191 / NBRC 104275) (Yeast).